Here is a 56-residue protein sequence, read N- to C-terminus: UPF0434 protein WIGBR2520 (56 aa).

This sequence belongs to the UPF0434 family.

This Wigglesworthia glossinidia brevipalpis protein is UPF0434 protein WIGBR2520.